A 359-amino-acid polypeptide reads, in one-letter code: Non-classical arabinogalactan protein 31 (359 aa).

An N-terminal signal peptide occupies residues 1–24 (MGFIGKSVLVSLVALWCFTSSVFT). The tract at residues 31–215 (TQTPSLAPAP…PPVSPPTKPP (185 aa)) is disordered. Over residues 44-66 (HHGHHHPHPPHHHHPHPHPHPHP) the composition is skewed to basic residues. Pro residues predominate over residues 67 to 215 (PAKSPVKPPV…PPVSPPTKPP (149 aa)). 4-hydroxyproline occurs at positions 71, 75, 79, 82, 83, 87, 91, 95, 99, 103, 107, 111, 114, 115, 119, 123, 127, 131, 135, 139, 143, 147, 151, 155, 159, 163, 167, 171, 175, 179, 183, 186, 187, 191, 195, 199, 203, 207, 210, 211, 215, and 219. O-linked (Ara...) hydroxyproline glycans are attached at residues Pro71, Pro75, Pro79, Pro82, Pro83, Pro87, Pro91, Pro95, Pro99, Pro103, Pro107, Pro111, Pro114, Pro115, Pro119, Pro123, Pro127, Pro131, Pro135, Pro139, Pro143, Pro147, Pro151, Pro155, Pro159, Pro163, Pro167, Pro171, Pro175, Pro179, Pro183, Pro186, Pro187, Pro191, Pro195, Pro199, Pro203, Pro207, Pro210, Pro211, Pro215, and Pro219. The stretch at 90-109 (PPVYPPTKAPVKPPTKPPVK) is repeat 1. Repeat copies occupy residues 122-141 (PPVYPPTKAPVKPPTKPPVK), 142-161 (PPVYPPTKAPVKPPTKPPVK), and 162-181 (PPVYPPTKAPVKPPTKPPVK). Residues Asn226 and Asn269 are each glycosylated (N-linked (GlcNAc...) asparagine).

Belongs to the non-classical AGP family. Hydroxylated on numerous prolines in the proline-rich region. In terms of processing, O-glycosylated on numerous hydroxyprolines in the proline-rich region; noncontiguous hydroxylproline residues are glycosylated with arabinogalactan. In terms of tissue distribution, expressed in vascular bundles of roots, leaves, sepals and stamen filaments, and pistils but not stigma.

It is found in the secreted. It localises to the cell wall. Functionally, proteoglycan that may contribute to the strengthening of cell walls. The chain is Non-classical arabinogalactan protein 31 from Arabidopsis thaliana (Mouse-ear cress).